A 333-amino-acid polypeptide reads, in one-letter code: UDP-glucose 4-epimerase (333 aa).

Residues 11 to 12 (YI), 32 to 37 (DSLVTG), 52 to 53 (DL), 75 to 79 (FAAYS), N94, T119, Y143, K147, and F171 contribute to the NAD(+) site. Substrate contacts are provided by T119 and Y143. Y143 (proton acceptor) is an active-site residue. Substrate contacts are provided by residues N172, 191–192 (HL), 208–210 (MIF), R223, and 284–287 (RSGD).

The protein belongs to the NAD(P)-dependent epimerase/dehydratase family. As to quaternary structure, homodimer. The cofactor is NAD(+).

The enzyme catalyses UDP-alpha-D-glucose = UDP-alpha-D-galactose. The protein operates within carbohydrate metabolism; galactose metabolism. Functionally, involved in the metabolism of galactose. Catalyzes the conversion of UDP-galactose (UDP-Gal) to UDP-glucose (UDP-Glc) through a mechanism involving the transient reduction of NAD. This chain is UDP-glucose 4-epimerase (galE), found in Streptococcus mutans serotype c (strain ATCC 700610 / UA159).